The following is a 239-amino-acid chain: UDP-2,3-diacylglucosamine hydrolase (239 aa).

Positions 8, 10, 41, 79, and 114 each coordinate Mn(2+). 79 to 80 (NR) lines the substrate pocket. Substrate contacts are provided by Asp-122, Ser-160, Asn-164, Lys-167, and His-195. Mn(2+) is bound by residues His-195 and His-197.

Belongs to the LpxH family. Mn(2+) serves as cofactor.

The protein localises to the cell inner membrane. The catalysed reaction is UDP-2-N,3-O-bis[(3R)-3-hydroxytetradecanoyl]-alpha-D-glucosamine + H2O = 2-N,3-O-bis[(3R)-3-hydroxytetradecanoyl]-alpha-D-glucosaminyl 1-phosphate + UMP + 2 H(+). Its pathway is glycolipid biosynthesis; lipid IV(A) biosynthesis; lipid IV(A) from (3R)-3-hydroxytetradecanoyl-[acyl-carrier-protein] and UDP-N-acetyl-alpha-D-glucosamine: step 4/6. Hydrolyzes the pyrophosphate bond of UDP-2,3-diacylglucosamine to yield 2,3-diacylglucosamine 1-phosphate (lipid X) and UMP by catalyzing the attack of water at the alpha-P atom. Involved in the biosynthesis of lipid A, a phosphorylated glycolipid that anchors the lipopolysaccharide to the outer membrane of the cell. The polypeptide is UDP-2,3-diacylglucosamine hydrolase (Sodalis glossinidius (strain morsitans)).